Consider the following 172-residue polypeptide: 3-hydroxydecanoyl-[acyl-carrier-protein] dehydratase (172 aa).

The active site involves His-71.

The protein belongs to the thioester dehydratase family. FabA subfamily. In terms of assembly, homodimer.

Its subcellular location is the cytoplasm. The enzyme catalyses a (3R)-hydroxyacyl-[ACP] = a (2E)-enoyl-[ACP] + H2O. It carries out the reaction (3R)-hydroxydecanoyl-[ACP] = (2E)-decenoyl-[ACP] + H2O. It catalyses the reaction (2E)-decenoyl-[ACP] = (3Z)-decenoyl-[ACP]. Its pathway is lipid metabolism; fatty acid biosynthesis. Functionally, necessary for the introduction of cis unsaturation into fatty acids. Catalyzes the dehydration of (3R)-3-hydroxydecanoyl-ACP to E-(2)-decenoyl-ACP and then its isomerization to Z-(3)-decenoyl-ACP. Can catalyze the dehydratase reaction for beta-hydroxyacyl-ACPs with saturated chain lengths up to 16:0, being most active on intermediate chain length. This Brucella ovis (strain ATCC 25840 / 63/290 / NCTC 10512) protein is 3-hydroxydecanoyl-[acyl-carrier-protein] dehydratase.